A 259-amino-acid polypeptide reads, in one-letter code: Global transcriptional regulator CodY (259 aa).

A GAF domain region spans residues 1 to 155 (MNLLQKTRKI…GATVVGMEIL (155 aa)). Positions 203-222 (ASKIADRVGITRSVIVNALR) form a DNA-binding region, H-T-H motif. The residue at position 215 (S215) is a Phosphoserine.

Belongs to the CodY family.

It localises to the cytoplasm. In terms of biological role, DNA-binding global transcriptional regulator which is involved in the adaptive response to starvation and acts by directly or indirectly controlling the expression of numerous genes in response to nutrient availability. During rapid exponential growth, CodY is highly active and represses genes whose products allow adaptation to nutrient depletion. This is Global transcriptional regulator CodY from Geobacillus sp. (strain WCH70).